Reading from the N-terminus, the 308-residue chain is Protein translocase subunit SecF (308 aa).

The next 6 helical transmembrane spans lie at 28–48 (SIIL…NFGI), 140–160 (IEAG…YIWV), 164–184 (WYFG…ALGF), 194–214 (LSTI…SVVI), 246–266 (ILTV…GGEA), and 272–292 (VLVF…SAPI).

Belongs to the SecD/SecF family. SecF subfamily. As to quaternary structure, forms a complex with SecD. Part of the essential Sec protein translocation apparatus which comprises SecA, SecYEG and auxiliary proteins SecDF-YajC and YidC.

The protein localises to the cell inner membrane. Part of the Sec protein translocase complex. Interacts with the SecYEG preprotein conducting channel. SecDF uses the proton motive force (PMF) to complete protein translocation after the ATP-dependent function of SecA. The sequence is that of Protein translocase subunit SecF from Rickettsia conorii (strain ATCC VR-613 / Malish 7).